Reading from the N-terminus, the 80-residue chain is MENIKMEMIYFAAAIMLGMAAVGAAIGISLLGGKFLEGAARQPDLMPILRTNFFIVMGLVDAIPMIVVGMALYLIFGVAA.

2 helical membrane-spanning segments follow: residues 8–28 (MIYFAAAIMLGMAAVGAAIGI) and 55–75 (IVMGLVDAIPMIVVGMALYLI).

Belongs to the ATPase C chain family. In terms of assembly, F-type ATPases have 2 components, F(1) - the catalytic core - and F(0) - the membrane proton channel. F(1) has five subunits: alpha(3), beta(3), gamma(1), delta(1), epsilon(1). F(0) has three main subunits: a(1), b(2) and c(10-14). The alpha and beta chains form an alternating ring which encloses part of the gamma chain. F(1) is attached to F(0) by a central stalk formed by the gamma and epsilon chains, while a peripheral stalk is formed by the delta and b chains.

The protein localises to the cell inner membrane. Its function is as follows. F(1)F(0) ATP synthase produces ATP from ADP in the presence of a proton or sodium gradient. F-type ATPases consist of two structural domains, F(1) containing the extramembraneous catalytic core and F(0) containing the membrane proton channel, linked together by a central stalk and a peripheral stalk. During catalysis, ATP synthesis in the catalytic domain of F(1) is coupled via a rotary mechanism of the central stalk subunits to proton translocation. In terms of biological role, key component of the F(0) channel; it plays a direct role in translocation across the membrane. A homomeric c-ring of between 10-14 subunits forms the central stalk rotor element with the F(1) delta and epsilon subunits. The protein is ATP synthase subunit c of Aeromonas salmonicida (strain A449).